Reading from the N-terminus, the 341-residue chain is Glucokinase (341 aa).

18-23 (GDIGGT) is a binding site for ATP.

Belongs to the bacterial glucokinase family.

The protein resides in the cytoplasm. The enzyme catalyses D-glucose + ATP = D-glucose 6-phosphate + ADP + H(+). In Rhizobium etli (strain ATCC 51251 / DSM 11541 / JCM 21823 / NBRC 15573 / CFN 42), this protein is Glucokinase.